The sequence spans 131 residues: Large ribosomal subunit protein bL17 (131 aa).

It belongs to the bacterial ribosomal protein bL17 family. As to quaternary structure, part of the 50S ribosomal subunit. Contacts protein L32.

This chain is Large ribosomal subunit protein bL17, found in Methylibium petroleiphilum (strain ATCC BAA-1232 / LMG 22953 / PM1).